We begin with the raw amino-acid sequence, 201 residues long: Ribosomal RNA large subunit methyltransferase E (201 aa).

S-adenosyl-L-methionine is bound by residues Gly-49, Trp-51, Asp-69, Asp-87, and Asp-111. The active-site Proton acceptor is Lys-151.

This sequence belongs to the class I-like SAM-binding methyltransferase superfamily. RNA methyltransferase RlmE family.

It localises to the cytoplasm. It catalyses the reaction uridine(2552) in 23S rRNA + S-adenosyl-L-methionine = 2'-O-methyluridine(2552) in 23S rRNA + S-adenosyl-L-homocysteine + H(+). In terms of biological role, specifically methylates the uridine in position 2552 of 23S rRNA at the 2'-O position of the ribose in the fully assembled 50S ribosomal subunit. In Nitratidesulfovibrio vulgaris (strain DSM 19637 / Miyazaki F) (Desulfovibrio vulgaris), this protein is Ribosomal RNA large subunit methyltransferase E.